The sequence spans 500 residues: Aspartyl/glutamyl-tRNA(Asn/Gln) amidotransferase subunit B (500 aa).

It belongs to the GatB/GatE family. GatB subfamily. As to quaternary structure, heterotrimer of A, B and C subunits.

It catalyses the reaction L-glutamyl-tRNA(Gln) + L-glutamine + ATP + H2O = L-glutaminyl-tRNA(Gln) + L-glutamate + ADP + phosphate + H(+). The enzyme catalyses L-aspartyl-tRNA(Asn) + L-glutamine + ATP + H2O = L-asparaginyl-tRNA(Asn) + L-glutamate + ADP + phosphate + 2 H(+). Allows the formation of correctly charged Asn-tRNA(Asn) or Gln-tRNA(Gln) through the transamidation of misacylated Asp-tRNA(Asn) or Glu-tRNA(Gln) in organisms which lack either or both of asparaginyl-tRNA or glutaminyl-tRNA synthetases. The reaction takes place in the presence of glutamine and ATP through an activated phospho-Asp-tRNA(Asn) or phospho-Glu-tRNA(Gln). This is Aspartyl/glutamyl-tRNA(Asn/Gln) amidotransferase subunit B from Clavibacter michiganensis subsp. michiganensis (strain NCPPB 382).